The following is a 223-amino-acid chain: Phosphoribosylformylglycinamidine synthase subunit PurQ (223 aa).

The 220-residue stretch at 4–223 (KIGVITFPGT…FLSAVGTIAA (220 aa)) folds into the Glutamine amidotransferase type-1 domain. The active-site Nucleophile is C87. Active-site residues include H195 and E197.

As to quaternary structure, part of the FGAM synthase complex composed of 1 PurL, 1 PurQ and 2 PurS subunits.

It is found in the cytoplasm. It catalyses the reaction N(2)-formyl-N(1)-(5-phospho-beta-D-ribosyl)glycinamide + L-glutamine + ATP + H2O = 2-formamido-N(1)-(5-O-phospho-beta-D-ribosyl)acetamidine + L-glutamate + ADP + phosphate + H(+). The catalysed reaction is L-glutamine + H2O = L-glutamate + NH4(+). It functions in the pathway purine metabolism; IMP biosynthesis via de novo pathway; 5-amino-1-(5-phospho-D-ribosyl)imidazole from N(2)-formyl-N(1)-(5-phospho-D-ribosyl)glycinamide: step 1/2. Part of the phosphoribosylformylglycinamidine synthase complex involved in the purines biosynthetic pathway. Catalyzes the ATP-dependent conversion of formylglycinamide ribonucleotide (FGAR) and glutamine to yield formylglycinamidine ribonucleotide (FGAM) and glutamate. The FGAM synthase complex is composed of three subunits. PurQ produces an ammonia molecule by converting glutamine to glutamate. PurL transfers the ammonia molecule to FGAR to form FGAM in an ATP-dependent manner. PurS interacts with PurQ and PurL and is thought to assist in the transfer of the ammonia molecule from PurQ to PurL. This chain is Phosphoribosylformylglycinamidine synthase subunit PurQ, found in Corynebacterium glutamicum (strain ATCC 13032 / DSM 20300 / JCM 1318 / BCRC 11384 / CCUG 27702 / LMG 3730 / NBRC 12168 / NCIMB 10025 / NRRL B-2784 / 534).